The following is a 337-amino-acid chain: Protein BIG GRAIN 1-like (337 aa).

3 disordered regions span residues methionine 1–serine 32, serine 120–serine 163, and lysine 179–serine 233. Residues histidine 137 to alanine 146 are compositionally biased toward basic and acidic residues. Low complexity-rich tracts occupy residues proline 150 to serine 163, proline 195 to alanine 209, and arginine 219 to alanine 230.

It belongs to the BIG GRAIN 1 (BG1) plant protein family.

It localises to the cell membrane. In terms of biological role, involved in auxin transport. Regulator of the auxin signaling pathway. This is Protein BIG GRAIN 1-like from Oryza sativa subsp. indica (Rice).